Here is a 55-residue protein sequence, read N- to C-terminus: Locustin (55 aa).

Intrachain disulfides connect Cys-5-Cys-40, Cys-7-Cys-36, Cys-10-Cys-32, and Cys-17-Cys-54.

As to quaternary structure, monomer. As to expression, stored in hemocyte granules and secreted into the hemolymph.

It localises to the secreted. In terms of biological role, has antibacterial activity against Gram-positive bacterium M.luteus. This chain is Locustin, found in Locusta migratoria (Migratory locust).